The following is a 145-amino-acid chain: Cell division protein SepF (145 aa).

The protein belongs to the SepF family. As to quaternary structure, homodimer. Interacts with FtsZ.

It localises to the cytoplasm. Functionally, cell division protein that is part of the divisome complex and is recruited early to the Z-ring. Probably stimulates Z-ring formation, perhaps through the cross-linking of FtsZ protofilaments. Its function overlaps with FtsA. The protein is Cell division protein SepF of Lactobacillus acidophilus (strain ATCC 700396 / NCK56 / N2 / NCFM).